The chain runs to 106 residues: Large ribosomal subunit protein P2 (106 aa).

The disordered stretch occupies residues 80–106 (AAAAPAKKVVEEKKEESDDDMGMGLFD).

The protein belongs to the eukaryotic ribosomal protein P1/P2 family. As to quaternary structure, P1 and P2 exist as dimers at the large ribosomal subunit. In terms of processing, phosphorylated.

Plays an important role in the elongation step of protein synthesis. In Dictyostelium discoideum (Social amoeba), this protein is Large ribosomal subunit protein P2 (rplp2).